Consider the following 198-residue polypeptide: MTSASNSPESYLSSKTRSSKLDDNYLKELNEDLKLRKQELLEILKPLEDKNNLLFQKLMSNLEEKQRSLQIMRQIMAGKGNDDSSVIELIKEAEEMKQNLERKNKMLRKEMEMLWNKTFNTEEFSDEEKVLQIKNKTDLQDGKAPKTPSSSRKTKNELETLCAEKGKEIRKRLFLPPGKETEENGMGQVSGTSQHHSE.

Positions 24 to 117 form a coiled coil; that stretch reads NYLKELNEDL…RKEMEMLWNK (94 aa). 2 stretches are compositionally biased toward basic and acidic residues: residues 135–144 and 154–167; these read NKTDLQDGKA and TKNE…EKGK. Residues 135-198 are disordered; that stretch reads NKTDLQDGKA…VSGTSQHHSE (64 aa). Positions 187–198 are enriched in polar residues; it reads GQVSGTSQHHSE.

The chain is Putative coiled-coil domain-containing protein 196 from Bos taurus (Bovine).